We begin with the raw amino-acid sequence, 164 residues long: Phosphopantetheine adenylyltransferase (164 aa).

Residue S9 coordinates substrate. ATP-binding positions include S9 to F10 and H17. 3 residues coordinate substrate: K41, L74, and R88. ATP-binding positions include G89–R91, E99, and Y124–T130.

This sequence belongs to the bacterial CoaD family. As to quaternary structure, homohexamer. Mg(2+) serves as cofactor.

It is found in the cytoplasm. The catalysed reaction is (R)-4'-phosphopantetheine + ATP + H(+) = 3'-dephospho-CoA + diphosphate. It participates in cofactor biosynthesis; coenzyme A biosynthesis; CoA from (R)-pantothenate: step 4/5. In terms of biological role, reversibly transfers an adenylyl group from ATP to 4'-phosphopantetheine, yielding dephospho-CoA (dPCoA) and pyrophosphate. The chain is Phosphopantetheine adenylyltransferase from Chromobacterium violaceum (strain ATCC 12472 / DSM 30191 / JCM 1249 / CCUG 213 / NBRC 12614 / NCIMB 9131 / NCTC 9757 / MK).